Reading from the N-terminus, the 332-residue chain is Phosphoribulokinase (332 aa).

This sequence belongs to the phosphoribulokinase family.

The enzyme catalyses D-ribulose 5-phosphate + ATP = D-ribulose 1,5-bisphosphate + ADP + H(+). It participates in carbohydrate biosynthesis; Calvin cycle. This chain is Phosphoribulokinase (prk), found in Synechocystis sp. (strain ATCC 27184 / PCC 6803 / Kazusa).